Consider the following 298-residue polypeptide: KH domain-containing protein At1g09660/At1g09670 (298 aa).

Residues 152–219 (DVPVDKYPSY…EHLCEPLHVL (68 aa)) form the KH domain. The segment at 266 to 298 (NGTLREESPSPSLSPCLSPSMSPFNSKRAKTEI) is disordered. 2 positions are modified to phosphoserine: Ser-273 and Ser-287. Residues 274-288 (PSPSLSPCLSPSMSP) are compositionally biased toward low complexity.

The protein localises to the nucleus. The chain is KH domain-containing protein At1g09660/At1g09670 from Arabidopsis thaliana (Mouse-ear cress).